The primary structure comprises 389 residues: Lipid-A-disaccharide synthase (389 aa).

The protein belongs to the LpxB family.

The catalysed reaction is a lipid X + a UDP-2-N,3-O-bis[(3R)-3-hydroxyacyl]-alpha-D-glucosamine = a lipid A disaccharide + UDP + H(+). Its pathway is bacterial outer membrane biogenesis; LPS lipid A biosynthesis. Its function is as follows. Condensation of UDP-2,3-diacylglucosamine and 2,3-diacylglucosamine-1-phosphate to form lipid A disaccharide, a precursor of lipid A, a phosphorylated glycolipid that anchors the lipopolysaccharide to the outer membrane of the cell. The protein is Lipid-A-disaccharide synthase of Paraburkholderia phytofirmans (strain DSM 17436 / LMG 22146 / PsJN) (Burkholderia phytofirmans).